The following is a 461-amino-acid chain: Fumarate hydratase class II (461 aa).

Residues 97 to 99 (SGT), 127 to 130 (HPND), 137 to 139 (SSN), and Thr185 each bind substrate. His186 functions as the Proton donor/acceptor in the catalytic mechanism. The active site involves Ser316. Substrate is bound by residues Ser317 and 322–324 (KVN).

This sequence belongs to the class-II fumarase/aspartase family. Fumarase subfamily. Homotetramer.

The protein localises to the cytoplasm. The enzyme catalyses (S)-malate = fumarate + H2O. Its pathway is carbohydrate metabolism; tricarboxylic acid cycle; (S)-malate from fumarate: step 1/1. Functionally, involved in the TCA cycle. Catalyzes the stereospecific interconversion of fumarate to L-malate. The polypeptide is Fumarate hydratase class II (Staphylococcus aureus (strain COL)).